The primary structure comprises 1028 residues: Formate dehydrogenase major subunit (1028 aa).

The tat-type signal signal peptide spans 1 to 33 (MQVSRRKFFKICAGGMAGTSAAMLGFAPANVLA). Residues 43 to 114 (AFESRNTCTY…GSLDYVNSES (72 aa)) enclose the 4Fe-4S Mo/W bis-MGD-type domain. Positions 50, 53, 57, and 100 each coordinate [4Fe-4S] cluster. Residue Sec204 is a non-standard amino acid, selenocysteine.

It belongs to the prokaryotic molybdopterin-containing oxidoreductase family. Formate dehydrogenase is a membrane-bound complex, formed by subunits alpha, beta and gamma. It depends on Mo-bis(molybdopterin guanine dinucleotide) as a cofactor. [4Fe-4S] cluster is required as a cofactor. In terms of processing, predicted to be exported by the Tat system. The position of the signal peptide cleavage has not been experimentally proven.

The protein resides in the periplasm. The catalysed reaction is formate + NAD(+) = CO2 + NADH. Allows to use formate as major electron donor during anaerobic respiration. Subunit alpha possibly forms the active site. In Haemophilus influenzae (strain ATCC 51907 / DSM 11121 / KW20 / Rd), this protein is Formate dehydrogenase major subunit (fdxG).